A 559-amino-acid polypeptide reads, in one-letter code: Protein GRAVITROPIC IN THE LIGHT 1 (559 aa).

The disordered stretch occupies residues 107–127 (AVNRREEYDTEEEENEEEGEI). Acidic residues predominate over residues 114–127 (YDTEEEENEEEGEI).

Its function is as follows. Required for red (R) and far red (FR) light-induced and phytochrome-mediated deregulation of negative gravitropism leading to randomization of hypocotyl growth orientation. The sequence is that of Protein GRAVITROPIC IN THE LIGHT 1 from Arabidopsis thaliana (Mouse-ear cress).